The following is a 185-amino-acid chain: Ribosome-recycling factor (185 aa).

The interval 142-165 (IVKDGDAGEDEGSRAEKELDGLTK) is disordered.

The protein belongs to the RRF family.

The protein resides in the cytoplasm. Functionally, responsible for the release of ribosomes from messenger RNA at the termination of protein biosynthesis. May increase the efficiency of translation by recycling ribosomes from one round of translation to another. This Renibacterium salmoninarum (strain ATCC 33209 / DSM 20767 / JCM 11484 / NBRC 15589 / NCIMB 2235) protein is Ribosome-recycling factor.